The sequence spans 318 residues: Ubiquitin-like domain-containing CTD phosphatase 1 (318 aa).

The residue at position 2 (Ala2) is an N-acetylalanine. The region spanning 3–81 is the Ubiquitin-like domain; it reads LPIIVKWGGQ…IMMMGTREES (79 aa). Lys117 carries the post-translational modification N6-acetyllysine. Residues 133–294 enclose the FCP1 homology domain; the sequence is PREGKKLLVL…LKLTQYLKEI (162 aa). Residues Asp143, Asp145, and Asp253 each contribute to the Mg(2+) site.

Requires Mg(2+) as cofactor.

Its subcellular location is the nucleus. The catalysed reaction is O-phospho-L-seryl-[protein] + H2O = L-seryl-[protein] + phosphate. The enzyme catalyses O-phospho-L-threonyl-[protein] + H2O = L-threonyl-[protein] + phosphate. In terms of biological role, dephosphorylates 26S nuclear proteasomes, thereby decreasing their proteolytic activity. Recruited to the 19S regulatory particle of the 26S proteasome through its interaction with 19S component PSMD2/RPN1. Once recruited, dephosphorylates 19S component PSMC2/RPT1 which impairs PSMC2 ATPase activity and disrupts 26S proteasome assembly. Has also been reported to stimulate the proteolytic activity of the 26S proteasome. This chain is Ubiquitin-like domain-containing CTD phosphatase 1 (UBLCP1), found in Pongo abelii (Sumatran orangutan).